Consider the following 388-residue polypeptide: Na(+)/H(+) antiporter NhaA (388 aa).

Helical transmembrane passes span 8–28, 33–53, 59–79, 95–115, 125–145, 154–174, 179–199, 217–237, 259–279, 287–307, 328–348, and 363–383; these read FLKL…IALI, PLQG…FAAL, LLLW…GLEV, LFPV…YLLF, GWAI…ALLS, VFLL…IALF, VSLV…WMNW, VCIL…GFLI, VAYL…LNGV, ILPL…IFLF, IFAV…ISGL, and LGIL…LRMV.

It belongs to the NhaA Na(+)/H(+) (TC 2.A.33) antiporter family.

It is found in the cell inner membrane. The enzyme catalyses Na(+)(in) + 2 H(+)(out) = Na(+)(out) + 2 H(+)(in). Functionally, na(+)/H(+) antiporter that extrudes sodium in exchange for external protons. This Photorhabdus laumondii subsp. laumondii (strain DSM 15139 / CIP 105565 / TT01) (Photorhabdus luminescens subsp. laumondii) protein is Na(+)/H(+) antiporter NhaA.